The chain runs to 112 residues: Protein 4.2 (112 aa).

The disordered stretch occupies residues Lys64–Asp93. A compositionally biased stretch (polar residues) spans His70 to Ser92.

The protein is Protein 4.2 of Escherichia phage T7 (Bacteriophage T7).